We begin with the raw amino-acid sequence, 848 residues long: Adenylate cyclase (848 aa).

The tract at residues 1 to 535 (MYLYIETLKQ…DVSHHFPLRL (535 aa)) is catalytic. Residues 541–848 (KALYSPCEIR…DTPLLQQYFS (308 aa)) are regulatory. His609 is subject to Phosphohistidine; by CRR.

Belongs to the adenylyl cyclase class-1 family.

The protein resides in the cytoplasm. The catalysed reaction is ATP = 3',5'-cyclic AMP + diphosphate. The polypeptide is Adenylate cyclase (cyaA) (Shigella flexneri).